The chain runs to 324 residues: Putative 12-oxophytodienoate reductase-like protein 1 (324 aa).

At Met-1 the chain carries N-acetylmethionine. FMN-binding positions include 14 to 16 (PMA), Ala-47, and Gln-89. The segment covering 99–113 (QDCQPNGESPVSSTD) has biased composition (polar residues). Residues 99–128 (QDCQPNGESPVSSTDKPFADDPSNEFTPPR) form a disordered region. 160–163 (HGAH) provides a ligand contact to substrate. Catalysis depends on Tyr-165, which acts as the Proton donor. Arg-212 lines the FMN pocket. Arg-252 contributes to the substrate binding site. FMN is bound by residues Gly-282 and 303–304 (GR).

This sequence belongs to the NADH:flavin oxidoreductase/NADH oxidase family. FMN is required as a cofactor.

Functionally, putative oxophytodienoate reductase that may be involved in the biosynthesis or metabolism of oxylipin signaling molecules. In Arabidopsis thaliana (Mouse-ear cress), this protein is Putative 12-oxophytodienoate reductase-like protein 1.